A 608-amino-acid chain; its full sequence is Glutamyl-tRNA(Gln) amidotransferase subunit E (608 aa).

Residues 402 to 422 (EETRGANPDGTTRFLRPRPGA) are disordered.

This sequence belongs to the GatB/GatE family. GatE subfamily. As to quaternary structure, heterodimer of GatD and GatE.

It catalyses the reaction L-glutamyl-tRNA(Gln) + L-glutamine + ATP + H2O = L-glutaminyl-tRNA(Gln) + L-glutamate + ADP + phosphate + H(+). In terms of biological role, allows the formation of correctly charged Gln-tRNA(Gln) through the transamidation of misacylated Glu-tRNA(Gln) in organisms which lack glutaminyl-tRNA synthetase. The reaction takes place in the presence of glutamine and ATP through an activated gamma-phospho-Glu-tRNA(Gln). The GatDE system is specific for glutamate and does not act on aspartate. The sequence is that of Glutamyl-tRNA(Gln) amidotransferase subunit E from Pyrobaculum calidifontis (strain DSM 21063 / JCM 11548 / VA1).